The following is a 283-amino-acid chain: Pantothenate synthetase (283 aa).

26 to 33 is an ATP binding site; sequence MGNLHEGH. H33 (proton donor) is an active-site residue. Q57 is a binding site for (R)-pantoate. Q57 contributes to the beta-alanine binding site. 144-147 contributes to the ATP binding site; it reads GKKD. Q150 serves as a coordination point for (R)-pantoate. ATP contacts are provided by residues V173 and 181–184; that span reads LSSR.

It belongs to the pantothenate synthetase family. As to quaternary structure, homodimer.

The protein localises to the cytoplasm. It carries out the reaction (R)-pantoate + beta-alanine + ATP = (R)-pantothenate + AMP + diphosphate + H(+). It functions in the pathway cofactor biosynthesis; (R)-pantothenate biosynthesis; (R)-pantothenate from (R)-pantoate and beta-alanine: step 1/1. In terms of biological role, catalyzes the condensation of pantoate with beta-alanine in an ATP-dependent reaction via a pantoyl-adenylate intermediate. This Ralstonia pickettii (strain 12J) protein is Pantothenate synthetase.